Here is a 142-residue protein sequence, read N- to C-terminus: Large ribosomal subunit protein uL11 (142 aa).

The protein belongs to the universal ribosomal protein uL11 family. As to quaternary structure, part of the ribosomal stalk of the 50S ribosomal subunit. Interacts with L10 and the large rRNA to form the base of the stalk. L10 forms an elongated spine to which L12 dimers bind in a sequential fashion forming a multimeric L10(L12)X complex. Post-translationally, one or more lysine residues are methylated.

Forms part of the ribosomal stalk which helps the ribosome interact with GTP-bound translation factors. The polypeptide is Large ribosomal subunit protein uL11 (Bradyrhizobium sp. (strain BTAi1 / ATCC BAA-1182)).